We begin with the raw amino-acid sequence, 155 residues long: SsrA-binding protein (155 aa).

This sequence belongs to the SmpB family.

The protein resides in the cytoplasm. Its function is as follows. Required for rescue of stalled ribosomes mediated by trans-translation. Binds to transfer-messenger RNA (tmRNA), required for stable association of tmRNA with ribosomes. tmRNA and SmpB together mimic tRNA shape, replacing the anticodon stem-loop with SmpB. tmRNA is encoded by the ssrA gene; the 2 termini fold to resemble tRNA(Ala) and it encodes a 'tag peptide', a short internal open reading frame. During trans-translation Ala-aminoacylated tmRNA acts like a tRNA, entering the A-site of stalled ribosomes, displacing the stalled mRNA. The ribosome then switches to translate the ORF on the tmRNA; the nascent peptide is terminated with the 'tag peptide' encoded by the tmRNA and targeted for degradation. The ribosome is freed to recommence translation, which seems to be the essential function of trans-translation. This Geobacillus kaustophilus (strain HTA426) protein is SsrA-binding protein.